The chain runs to 221 residues: Deoxyribose-phosphate aldolase (221 aa).

Asp89 (proton donor/acceptor) is an active-site residue. Lys151 serves as the catalytic Schiff-base intermediate with acetaldehyde. Lys180 (proton donor/acceptor) is an active-site residue.

It belongs to the DeoC/FbaB aldolase family. DeoC type 1 subfamily.

It localises to the cytoplasm. The catalysed reaction is 2-deoxy-D-ribose 5-phosphate = D-glyceraldehyde 3-phosphate + acetaldehyde. It functions in the pathway carbohydrate degradation; 2-deoxy-D-ribose 1-phosphate degradation; D-glyceraldehyde 3-phosphate and acetaldehyde from 2-deoxy-alpha-D-ribose 1-phosphate: step 2/2. Catalyzes a reversible aldol reaction between acetaldehyde and D-glyceraldehyde 3-phosphate to generate 2-deoxy-D-ribose 5-phosphate. The sequence is that of Deoxyribose-phosphate aldolase from Brevibacillus brevis (strain 47 / JCM 6285 / NBRC 100599).